The primary structure comprises 434 residues: Adenylosuccinate synthetase (434 aa).

GTP is bound by residues 15 to 21 (GDEGKGK) and 43 to 45 (GHT). The active-site Proton acceptor is the Asp-16. Mg(2+)-binding residues include Asp-16 and Gly-43. Residues 16-19 (DEGK), 41-44 (NAGH), Thr-133, Arg-147, Gln-228, Thr-243, and Arg-307 contribute to the IMP site. The active-site Proton donor is His-44. 303 to 309 (SVTGRAR) provides a ligand contact to substrate. GTP contacts are provided by residues Arg-309, 335–337 (KLD), and 418–420 (STG).

This sequence belongs to the adenylosuccinate synthetase family. Homodimer. The cofactor is Mg(2+).

It is found in the cytoplasm. It catalyses the reaction IMP + L-aspartate + GTP = N(6)-(1,2-dicarboxyethyl)-AMP + GDP + phosphate + 2 H(+). Its pathway is purine metabolism; AMP biosynthesis via de novo pathway; AMP from IMP: step 1/2. Functionally, plays an important role in the de novo pathway of purine nucleotide biosynthesis. Catalyzes the first committed step in the biosynthesis of AMP from IMP. This is Adenylosuccinate synthetase from Neisseria meningitidis serogroup C / serotype 2a (strain ATCC 700532 / DSM 15464 / FAM18).